A 238-amino-acid chain; its full sequence is Leucine-rich repeat-containing protein 57 (238 aa).

LRR repeat units follow at residues 10–36 (LETS…LQKL), 37–62 (TANL…SFQH), 64–82 (KSFT…DIGK), 83–106 (LKKL…IGQL), 108–128 (SLRT…GLGT), 129–152 (LRQL…VAEL), 154–173 (AIEI…EVSR), and 174–199 (TPRL…ILTD).

In Danio rerio (Zebrafish), this protein is Leucine-rich repeat-containing protein 57 (lrrc57).